We begin with the raw amino-acid sequence, 175 residues long: Shikimate kinase (175 aa).

14–19 (GAGKST) contributes to the ATP binding site. Ser18 provides a ligand contact to Mg(2+). Substrate-binding residues include Asp36, Arg60, and Gly82. Position 120 (Arg120) interacts with ATP. Arg140 serves as a coordination point for substrate. ATP is bound at residue Gln157.

Belongs to the shikimate kinase family. In terms of assembly, monomer. The cofactor is Mg(2+).

Its subcellular location is the cytoplasm. It carries out the reaction shikimate + ATP = 3-phosphoshikimate + ADP + H(+). The protein operates within metabolic intermediate biosynthesis; chorismate biosynthesis; chorismate from D-erythrose 4-phosphate and phosphoenolpyruvate: step 5/7. Functionally, catalyzes the specific phosphorylation of the 3-hydroxyl group of shikimic acid using ATP as a cosubstrate. This is Shikimate kinase from Histophilus somni (strain 2336) (Haemophilus somnus).